A 449-amino-acid polypeptide reads, in one-letter code: Phosphoribosylamine--glycine ligase (449 aa).

Residues 112–325 enclose the ATP-grasp domain; sequence RELMEKYDIP…IVTLHASIAE (214 aa). 139-202 lines the ATP pocket; sequence IDELGKPVAV…EEKCVGEEYT (64 aa). Mg(2+) contacts are provided by glutamine 283, glutamate 295, and asparagine 297. Mn(2+) contacts are provided by glutamine 283, glutamate 295, and asparagine 297.

The protein belongs to the GARS family. Mg(2+) serves as cofactor. It depends on Mn(2+) as a cofactor.

The enzyme catalyses 5-phospho-beta-D-ribosylamine + glycine + ATP = N(1)-(5-phospho-beta-D-ribosyl)glycinamide + ADP + phosphate + H(+). It participates in purine metabolism; IMP biosynthesis via de novo pathway; N(1)-(5-phospho-D-ribosyl)glycinamide from 5-phospho-alpha-D-ribose 1-diphosphate: step 2/2. The chain is Phosphoribosylamine--glycine ligase from Methanopyrus kandleri (strain AV19 / DSM 6324 / JCM 9639 / NBRC 100938).